A 1679-amino-acid chain; its full sequence is Probable myosin heavy chain ECU04_1000 (1679 aa).

The segment covering 1–14 (MEGTTNKDIGSGSS) has biased composition (polar residues). The segment at 1–22 (MEGTTNKDIGSGSSRPGGEVSV) is disordered. The Myosin N-terminal SH3-like domain occupies 31-79 (MEKKWVWAPSSKEAYVCGFVVKEEGDVLEIDCRGVIVRHKSCEVFRMNP). Positions 83–754 (DMVDDLAELS…VLADIEDMRD (672 aa)) constitute a Myosin motor domain. Residue 176–183 (GESGAGKT) participates in ATP binding. The tract at residues 624–646 (LASLMSELRRTNPHFVRCIIPNL) is actin-binding. A coiled-coil region spans residues 823–1644 (GEMKEKEAMI…SKMLEMKKKL (822 aa)).

It belongs to the TRAFAC class myosin-kinesin ATPase superfamily. Myosin family.

Functionally, cellular myosin that appears to play a role in cytokinesis, cell shape, and specialized functions such as secretion and capping. In Encephalitozoon cuniculi (strain GB-M1) (Microsporidian parasite), this protein is Probable myosin heavy chain ECU04_1000.